The primary structure comprises 637 residues: Zinc finger protein rsv2 (637 aa).

6 disordered regions span residues 1–41, 145–164, 169–207, 221–363, 404–427, and 440–558; these read MDTT…SKMN, SNHQ…PTSA, IITA…QPFS, TGAI…STAL, QDSF…TRSY, and SVNP…GAQR. Residues 172-189 are compositionally biased toward low complexity; sequence ANSSPSGNAGSNASASMS. The segment covering 196-207 has biased composition (polar residues); the sequence is PSASTINDQPFS. Positions 279 to 296 are enriched in basic and acidic residues; sequence SDLKRSLGHNQKSDRVSK. Over residues 298 to 344 the composition is skewed to polar residues; that stretch reads VSPQHQANPSTLNNPLKTQNFDSSKNLYTDNKDSSLVSPTGLQSRME. Composition is skewed to basic and acidic residues over residues 345 to 355 and 404 to 413; these read QNPEVRAHPMK and QDSFNKESIK. Low complexity predominate over residues 455–471; it reads VPSNTTISSSPPLTSPV. Composition is skewed to polar residues over residues 472 to 498 and 508 to 527; these read KTSA…QSAA and YYNT…QKVS. The span at 544–554 shows a compositional bias: low complexity; that stretch reads TTPTNSSTTAT. The C2H2-type 1 zinc-finger motif lies at 572–603; that stretch reads VRCTLQNRVTGEICNTVFSRTYDLIRHQDTIH. Residues 610-635 form a C2H2-type 2; degenerate zinc finger; it reads FRCEICGDQRHFSRHDALVRHLRVKH.

It localises to the nucleus. The polypeptide is Zinc finger protein rsv2 (rsv2) (Schizosaccharomyces pombe (strain 972 / ATCC 24843) (Fission yeast)).